The following is a 181-amino-acid chain: Large ribosomal subunit protein uL6 (181 aa).

This sequence belongs to the universal ribosomal protein uL6 family. As to quaternary structure, part of the 50S ribosomal subunit.

Functionally, this protein binds to the 23S rRNA, and is important in its secondary structure. It is located near the subunit interface in the base of the L7/L12 stalk, and near the tRNA binding site of the peptidyltransferase center. The chain is Large ribosomal subunit protein uL6 from Hydrogenobaculum sp. (strain Y04AAS1).